The chain runs to 1083 residues: LIM and calponin homology domains-containing protein 1 (1083 aa).

3 disordered regions span residues 1–22 (MASN…PPDT), 185–248 (SERS…VRKD), and 291–311 (REDY…ERPF). The Calponin-homology (CH) domain maps to 21–138 (DTACMEAQKW…TVYWLGKAAN (118 aa)). Over residues 229-248 (RGSDSESDLPHRRIPDVRKD) the composition is skewed to basic and acidic residues. A coiled-coil region spans residues 356 to 424 (LARWKTRRRS…HVAYKNAKTR (69 aa)). Positions 462-474 (PSLLSSSEDPNPL) are enriched in low complexity. 4 disordered regions span residues 462-512 (PSLL…LISP), 625-661 (QKDE…VPAV), 698-725 (KEAK…ENES), and 759-779 (SPAL…DPEE). 2 stretches are compositionally biased toward polar residues: residues 478-512 (RQQS…LISP) and 640-657 (SVEQ…TTQA). Over residues 716 to 725 (ESSKIKENES) the composition is skewed to basic and acidic residues. Residues 784 to 835 (QEKWQQEQERLLQERYQKEQEKLKEEWEKAQKEVEEEERKYYEEERKIIEDT) are a coiled coil. The interval 987 to 1006 (KEETLNSSQSTSQCQSPNRS) is disordered. The segment covering 991–1006 (LNSSQSTSQCQSPNRS) has biased composition (polar residues). Residues 1011–1077 (KLCSTCGLPL…NDCYVKSRTA (67 aa)) form the LIM zinc-binding domain.

This sequence belongs to the LIMCH1 family.

It localises to the cytoplasm. The protein localises to the cytoskeleton. It is found in the stress fiber. Functionally, actin stress fibers-associated protein that activates non-muscle myosin IIa. Through the activation of non-muscle myosin IIa, positively regulates actin stress fibers assembly and stabilizes focal adhesions. It therefore negatively regulates cell spreading and cell migration. In Xenopus laevis (African clawed frog), this protein is LIM and calponin homology domains-containing protein 1 (limch1).